A 777-amino-acid polypeptide reads, in one-letter code: Semaphorin-3D (777 aa).

Residues 1-37 (MNVTKDENPRSRSQDLHLFHAWMMLIMTVLFLPVTET) form the signal peptide. The Sema domain occupies 44-531 (RLKLTYKDLL…SWDGLVQLSL (488 aa)). A disulfide bridge links Cys-117 with Cys-128. Asn-139 is a glycosylation site (N-linked (GlcNAc...) asparagine). 4 disulfide bridges follow: Cys-146–Cys-155, Cys-286–Cys-398, Cys-310–Cys-358, and Cys-534–Cys-552. The PSI domain occupies 533–585 (RCDTYGKACADCCLARDPYCAWDGNACSRYAPTSKRRARRQDVKYGDPITQCW). An Ig-like C2-type domain is found at 592–680 (SHETADEKVI…TFIHTIVKLT (89 aa)). N-linked (GlcNAc...) asparagine glycosylation is found at Asn-607 and Asn-724. Cys-665 and Cys-731 form a disulfide bridge. Residues 740–765 (RRQRNKGSPKWKHMQEMKKKRNRRHH) show a composition bias toward basic residues. The segment at 740 to 777 (RRQRNKGSPKWKHMQEMKKKRNRRHHRDLDELQRSVAT) is disordered. A compositionally biased stretch (basic and acidic residues) spans 766–777 (RDLDELQRSVAT).

This sequence belongs to the semaphorin family.

The protein localises to the secreted. In terms of biological role, induces the collapse and paralysis of neuronal growth cones. Could potentially act as repulsive cues toward specific neuronal populations. Binds to neuropilin. The protein is Semaphorin-3D (Sema3d) of Mus musculus (Mouse).